We begin with the raw amino-acid sequence, 757 residues long: Maltose phosphorylase (757 aa).

354-355 (WD) contributes to the substrate binding site. Glu-483 functions as the Proton donor in the catalytic mechanism. 588–589 (KQ) serves as a coordination point for substrate.

This sequence belongs to the glycosyl hydrolase 65 family.

It carries out the reaction D-maltose + phosphate = beta-D-glucose 1-phosphate + D-glucose. It functions in the pathway glycan degradation; maltose degradation. In terms of biological role, catalyzes the phosphorolysis of maltose, leading to the formation of glucose and glucose 1-P. In Bacillus subtilis (strain 168), this protein is Maltose phosphorylase (mdxK).